Here is a 131-residue protein sequence, read N- to C-terminus: Small ribosomal subunit protein uS8 (131 aa).

This sequence belongs to the universal ribosomal protein uS8 family. As to quaternary structure, part of the 30S ribosomal subunit. Contacts proteins S5 and S12.

Functionally, one of the primary rRNA binding proteins, it binds directly to 16S rRNA central domain where it helps coordinate assembly of the platform of the 30S subunit. The chain is Small ribosomal subunit protein uS8 from Chlorobium phaeobacteroides (strain DSM 266 / SMG 266 / 2430).